We begin with the raw amino-acid sequence, 115 residues long: Large ribosomal subunit protein bL20 (115 aa).

The protein belongs to the bacterial ribosomal protein bL20 family.

Its function is as follows. Binds directly to 23S ribosomal RNA and is necessary for the in vitro assembly process of the 50S ribosomal subunit. It is not involved in the protein synthesizing functions of that subunit. In Chlorobium phaeobacteroides (strain BS1), this protein is Large ribosomal subunit protein bL20.